Here is a 218-residue protein sequence, read N- to C-terminus: Glycerol-3-phosphate acyltransferase 2 (218 aa).

A run of 5 helical transmembrane segments spans residues 6–26 (YLLI…VLVG), 50–70 (VMGP…GTLA), 85–105 (LLLI…FLKF), 115–135 (AGVF…VFLP), and 159–179 (FWFH…LLFV).

This sequence belongs to the PlsY family. Probably interacts with PlsX.

It is found in the cell membrane. It carries out the reaction an acyl phosphate + sn-glycerol 3-phosphate = a 1-acyl-sn-glycero-3-phosphate + phosphate. It participates in lipid metabolism; phospholipid metabolism. Functionally, catalyzes the transfer of an acyl group from acyl-phosphate (acyl-PO(4)) to glycerol-3-phosphate (G3P) to form lysophosphatidic acid (LPA). This enzyme utilizes acyl-phosphate as fatty acyl donor, but not acyl-CoA or acyl-ACP. The chain is Glycerol-3-phosphate acyltransferase 2 from Lactobacillus johnsonii (strain CNCM I-12250 / La1 / NCC 533).